A 755-amino-acid polypeptide reads, in one-letter code: 1,4-alpha-glucan branching enzyme GlgB (755 aa).

The active-site Nucleophile is D431. Residue E484 is the Proton donor of the active site.

This sequence belongs to the glycosyl hydrolase 13 family. GlgB subfamily. In terms of assembly, monomer.

The catalysed reaction is Transfers a segment of a (1-&gt;4)-alpha-D-glucan chain to a primary hydroxy group in a similar glucan chain.. It functions in the pathway glycan biosynthesis; glycogen biosynthesis. Its function is as follows. Catalyzes the formation of the alpha-1,6-glucosidic linkages in glycogen by scission of a 1,4-alpha-linked oligosaccharide from growing alpha-1,4-glucan chains and the subsequent attachment of the oligosaccharide to the alpha-1,6 position. The chain is 1,4-alpha-glucan branching enzyme GlgB from Prochlorococcus marinus (strain NATL2A).